A 352-amino-acid chain; its full sequence is Phospho-N-acetylmuramoyl-pentapeptide-transferase (352 aa).

The next 10 membrane-spanning stretches (helical) occupy residues 16 to 36 (YITF…LLFM), 66 to 86 (TPTM…LLCA), 88 to 108 (LNNL…LIGL), 129 to 149 (MLYL…FGME), 160 to 180 (PLLS…VATS), 191 to 211 (GLAT…VYIA), 228 to 248 (SGEA…FLWF), 255 to 275 (LFMG…MAII), 280 to 300 (FLLF…ILQI), and 329 to 349 (KIIV…LLTL).

It belongs to the glycosyltransferase 4 family. MraY subfamily. Mg(2+) is required as a cofactor.

The protein resides in the cell inner membrane. It carries out the reaction UDP-N-acetyl-alpha-D-muramoyl-L-alanyl-gamma-D-glutamyl-meso-2,6-diaminopimeloyl-D-alanyl-D-alanine + di-trans,octa-cis-undecaprenyl phosphate = di-trans,octa-cis-undecaprenyl diphospho-N-acetyl-alpha-D-muramoyl-L-alanyl-D-glutamyl-meso-2,6-diaminopimeloyl-D-alanyl-D-alanine + UMP. It participates in cell wall biogenesis; peptidoglycan biosynthesis. Functionally, catalyzes the initial step of the lipid cycle reactions in the biosynthesis of the cell wall peptidoglycan: transfers peptidoglycan precursor phospho-MurNAc-pentapeptide from UDP-MurNAc-pentapeptide onto the lipid carrier undecaprenyl phosphate, yielding undecaprenyl-pyrophosphoryl-MurNAc-pentapeptide, known as lipid I. In Wolinella succinogenes (strain ATCC 29543 / DSM 1740 / CCUG 13145 / JCM 31913 / LMG 7466 / NCTC 11488 / FDC 602W) (Vibrio succinogenes), this protein is Phospho-N-acetylmuramoyl-pentapeptide-transferase.